The primary structure comprises 397 residues: Elongation factor Tu (397 aa).

The tr-type G domain maps to 10 to 206 (KPHVNIGTIG…ACDDYIPEPV (197 aa)). Positions 19-26 (GHIDHGKT) are G1. 19–26 (GHIDHGKT) contributes to the GTP binding site. Threonine 26 contributes to the Mg(2+) binding site. The interval 62 to 66 (GITIS) is G2. Residues 83 to 86 (DCPG) are G3. Residues 83–87 (DCPGH) and 138–141 (NKAD) contribute to the GTP site. The tract at residues 138–141 (NKAD) is G4. The G5 stretch occupies residues 176 to 178 (SAL).

This sequence belongs to the TRAFAC class translation factor GTPase superfamily. Classic translation factor GTPase family. EF-Tu/EF-1A subfamily. As to quaternary structure, monomer.

Its subcellular location is the cytoplasm. The enzyme catalyses GTP + H2O = GDP + phosphate + H(+). Its function is as follows. GTP hydrolase that promotes the GTP-dependent binding of aminoacyl-tRNA to the A-site of ribosomes during protein biosynthesis. In Acidothermus cellulolyticus (strain ATCC 43068 / DSM 8971 / 11B), this protein is Elongation factor Tu.